The primary structure comprises 216 residues: V-type ATP synthase subunit D (216 aa).

Belongs to the V-ATPase D subunit family.

Produces ATP from ADP in the presence of a proton gradient across the membrane. In Clostridium botulinum (strain Loch Maree / Type A3), this protein is V-type ATP synthase subunit D.